The sequence spans 533 residues: CEP295 N-terminal-like protein (533 aa).

Disordered stretches follow at residues 1–40 (MQRDTERAAQLSPSSEDEALVLRQKPLEMPAQEEDSTTLQ), 84–176 (RSMG…RVTR), 286–333 (LKAD…ETTE), and 370–399 (AGTSREQDDLLSLSPESGQEPPKSPLLEDE). The stretch at 40 to 72 (QQWKARQLQRLAEELKAEWQEARLQQVRQAERL) forms a coiled coil. The span at 107–126 (KERNRAAFREERGRREEHPR) shows a compositional bias: basic and acidic residues. Positions 416–531 (MALRQKQKAE…ARKRLQEFQK (116 aa)) form a coiled coil.

As to expression, expressed in mature spermatozoa (at protein level). Detected in retina, lung and kidney. In brain, highly expressed in brain-stem, cerebral cortex and thalamus with lesser expression in cerebellum and hippocampus.

It is found in the cell projection. It localises to the cilium. This chain is CEP295 N-terminal-like protein, found in Mus musculus (Mouse).